A 606-amino-acid chain; its full sequence is MTDAPVSRIRNFCIIAHIDHGKSTLADRLLQDTGTVANRDMQDQFLDNMDLERERGITIKLQAARMNYTAAHGEEYVLNLIDTPGHVDFSYEVSRSLQACEGALLVVDASQGVEAQTLANVYLALDNDLEIIPVLNKIDLPGADPDRIKEEVEAIIGLDCDNAIPCSAKTGLGVPEILQAVVDRVPPPKDAVEEPTKALIFDSYYDPYRGVIVYFRVMSGRINCKDKVLLMASKKTYELDEIGIMAPDQKKVDELHAGEVGYLAASIKAVADARVGDTITLVNAPADEALPGYTEAKPMVFCGLFPTEADQYPDLRDALDKLQLSDAALKYEPETSSAMGFGFRCGFLGLLHMEIVQERLEREYDLDLIVTAPSVIYKVNMIDGSEVMVDNPATLPDPQKRESIEEPYVRMEIYAPNEYNGALMGLCQERRGDYIDMKYITTDRVTLIYELPLAEVVTDFFDQMKTRTQGYASMEYSLIGYRKNQLVRLDVLINGERADALTTIVHQDKAYNVGKALVEKLKELIPRQQFKIPIQASIGSRIIASTSISAIRKDVLAKCYGGDISRKKKLLKKQAKGKKRMKAMGKVDVPQEAFMAVLKLNDGGGS.

The 183-residue stretch at 7 to 189 (SRIRNFCIIA…AVVDRVPPPK (183 aa)) folds into the tr-type G domain. GTP contacts are provided by residues 19–24 (DHGKST) and 136–139 (NKID).

Belongs to the TRAFAC class translation factor GTPase superfamily. Classic translation factor GTPase family. LepA subfamily.

The protein resides in the cell inner membrane. The catalysed reaction is GTP + H2O = GDP + phosphate + H(+). In terms of biological role, required for accurate and efficient protein synthesis under certain stress conditions. May act as a fidelity factor of the translation reaction, by catalyzing a one-codon backward translocation of tRNAs on improperly translocated ribosomes. Back-translocation proceeds from a post-translocation (POST) complex to a pre-translocation (PRE) complex, thus giving elongation factor G a second chance to translocate the tRNAs correctly. Binds to ribosomes in a GTP-dependent manner. The protein is Elongation factor 4 of Synechococcus sp. (strain CC9605).